Reading from the N-terminus, the 449-residue chain is Capsid protein (449 aa).

A DNA-binding region spans residues 1 to 43 (MARRARRPRGRFYAFRRGRWHHLKRLRRRYKFRHRRRQRYRRR). The nuclear localization signals stretch occupies residues 6-47 (RRPRGRFYAFRRGRWHHLKRLRRRYKFRHRRRQRYRRRAFRK).

This sequence belongs to the gyrovirus capsid protein family. Homomultimer (Potential). Interacts with Rep; this interaction relocates Rep into the nucleus.

The protein resides in the host nucleus. Its subcellular location is the virion. In terms of biological role, self-assembles to form the virion icosahedral capsid with a T=1 symmetry. This very small capsid (25 nm in diameter) allows the virus to be very stable in the environment and resistant to some disinfectants, including detergents. Essential for the initial attachment to host receptors. After attachment, the virus is endocytosed and traffics to the nucleus. The capsid protein binds and transports the viral genome and Rep across the nuclear envelope. This is Capsid protein (VP1) from Chicken anemia virus (isolate Australia) (CAV).